Reading from the N-terminus, the 360-residue chain is MASATAPAAAVPTLASPLGQLRHLAEELRLLLPRVRVGEAQETTEEFNREMFWRRLNEAAVTVSREATTLTTVFSQLPLPSAQETQKFCEQVHAAIKAFIAVYYLLPKDQGITLRKLVRGATLDIVDGMAQLMEVLSITPTQSPENNELISYNSVWVACQQMPHIPRDNKAAALLMLTKNVDFVKDAHEEMERAVEECDPYSGLLNDTEENNSDNHNDEDDVLGFPSNQDLYWSEDDQELIIPCLALVRASKACLKKIRILVAENGKKDQVAQLDDIVDISDEISPSVDDLALSIYPPMCHLTVRINSAKLVSVLKKALEITKASHVTPQPEDSWIPLLINAIDHCMNRIKELTQSELEL.

Position 2 is an N-acetylalanine (Ala-2). Interaction with TCF3 regions lie at residues 2 to 184 and 150 to 360; these read ASAT…VDFV and ISYN…ELEL. 2 interaction with RPLP0 regions span residues 2–190 and 240–360; these read ASAT…AHEE and LIIP…ELEL. A required for interaction with CCND1 region spans residues 2–208; sequence ASATAPAAAV…DPYSGLLNDT (207 aa).

The protein belongs to the CCNDBP1 family. In terms of assembly, interacts with CCND1 and GRAP2. May also interact with COPS5, RPLP0, SIRT6, SYF2 and TCF3. Post-translationally, phosphorylated.

It localises to the cytoplasm. The protein resides in the nucleus. May negatively regulate cell cycle progression. May act at least in part via inhibition of the cyclin-D1/CDK4 complex, thereby preventing phosphorylation of RB1 and blocking E2F-dependent transcription. This Pongo abelii (Sumatran orangutan) protein is Cyclin-D1-binding protein 1 (CCNDBP1).